Here is a 131-residue protein sequence, read N- to C-terminus: MAFFNLYLLGYQNSFQNKKRNTTEETNQKEPEPTRLPPIISKDGNYSVHQNSHTRYHEAVRKVLLKTFPNQVFRIPLTDAQNFSFWWSHDPGVRPEETMPWIRSPRHCLIKSAMTRFMDHSILNDRTFSLY.

The segment at 18 to 44 (KKRNTTEETNQKEPEPTRLPPIISKDG) is disordered. Over residues 21 to 33 (NTTEETNQKEPEP) the composition is skewed to basic and acidic residues.

In terms of assembly, microtubule inner protein component of sperm flagellar doublet microtubules.

The protein localises to the cytoplasm. Its subcellular location is the cytoskeleton. It is found in the flagellum axoneme. Its function is as follows. Microtubule inner protein (MIP) part of the dynein-decorated doublet microtubules (DMTs) in flagellum axoneme. May serve to reinforce and thus stabilize the microtubule structure in the sperm flagella. This is Sperm microtubule inner protein 11 from Homo sapiens (Human).